Consider the following 155-residue polypeptide: uncharacterized protein (155 aa).

An HTH asnC-type domain is found at 4-65 (IDEIDEVIVR…VVDPSFFGEF (62 aa)). The segment at residues 23-42 (LTELGRKVGLTASAVKNRIE) is a DNA-binding region (H-T-H motif).

This is an uncharacterized protein from Pyrococcus horikoshii (strain ATCC 700860 / DSM 12428 / JCM 9974 / NBRC 100139 / OT-3).